The following is a 415-amino-acid chain: Serine--tRNA ligase (415 aa).

Residue 231-233 coordinates L-serine; that stretch reads TAE. 262–264 provides a ligand contact to ATP; that stretch reads RSE. Glu285 is an L-serine binding site. 349–352 provides a ligand contact to ATP; that stretch reads EISS. Ser383 lines the L-serine pocket.

This sequence belongs to the class-II aminoacyl-tRNA synthetase family. Type-1 seryl-tRNA synthetase subfamily. Homodimer. The tRNA molecule binds across the dimer.

It is found in the cytoplasm. It carries out the reaction tRNA(Ser) + L-serine + ATP = L-seryl-tRNA(Ser) + AMP + diphosphate + H(+). It catalyses the reaction tRNA(Sec) + L-serine + ATP = L-seryl-tRNA(Sec) + AMP + diphosphate + H(+). Its pathway is aminoacyl-tRNA biosynthesis; selenocysteinyl-tRNA(Sec) biosynthesis; L-seryl-tRNA(Sec) from L-serine and tRNA(Sec): step 1/1. Its function is as follows. Catalyzes the attachment of serine to tRNA(Ser). Is also able to aminoacylate tRNA(Sec) with serine, to form the misacylated tRNA L-seryl-tRNA(Sec), which will be further converted into selenocysteinyl-tRNA(Sec). The protein is Serine--tRNA ligase of Helicobacter pylori (strain ATCC 700392 / 26695) (Campylobacter pylori).